A 113-amino-acid polypeptide reads, in one-letter code: Ribonuclease P protein component (113 aa).

A compositionally biased stretch (basic residues) spans 1–10; sequence MLPTRHRMRT. The disordered stretch occupies residues 1–23; the sequence is MLPTRHRMRTSAHFSTTVRSGAR.

Belongs to the RnpA family. Consists of a catalytic RNA component (M1 or rnpB) and a protein subunit.

It catalyses the reaction Endonucleolytic cleavage of RNA, removing 5'-extranucleotides from tRNA precursor.. RNaseP catalyzes the removal of the 5'-leader sequence from pre-tRNA to produce the mature 5'-terminus. It can also cleave other RNA substrates such as 4.5S RNA. The protein component plays an auxiliary but essential role in vivo by binding to the 5'-leader sequence and broadening the substrate specificity of the ribozyme. This is Ribonuclease P protein component from Kocuria rhizophila (strain ATCC 9341 / DSM 348 / NBRC 103217 / DC2201).